The sequence spans 792 residues: Probable exo-1,4-beta-xylosidase xlnD (792 aa).

The N-terminal stretch at 1 to 20 (MSVAKSIAAVLVALLPGALA) is a signal peptide. N-linked (GlcNAc...) asparagine glycosylation is found at asparagine 23, asparagine 87, asparagine 118, asparagine 142, and asparagine 246. Aspartate 310 is an active-site residue. N-linked (GlcNAc...) asparagine glycans are attached at residues asparagine 326, asparagine 385, asparagine 404, asparagine 440, asparagine 477, asparagine 518, asparagine 679, and asparagine 701.

It belongs to the glycosyl hydrolase 3 family.

Its subcellular location is the secreted. The enzyme catalyses Hydrolysis of (1-&gt;4)-beta-D-xylans, to remove successive D-xylose residues from the non-reducing termini.. The protein operates within glycan degradation; xylan degradation. Functionally, xylan 1,4-beta-xylosidase involved in the hydrolysis of xylan, a major structural heterogeneous polysaccharide found in plant biomass representing the second most abundant polysaccharide in the biosphere, after cellulose. The sequence is that of Probable exo-1,4-beta-xylosidase xlnD (xlnD) from Aspergillus fumigatus (strain ATCC MYA-4609 / CBS 101355 / FGSC A1100 / Af293) (Neosartorya fumigata).